Reading from the N-terminus, the 580-residue chain is Proline--tRNA ligase (580 aa).

It belongs to the class-II aminoacyl-tRNA synthetase family. ProS type 1 subfamily. Homodimer.

It localises to the cytoplasm. The enzyme catalyses tRNA(Pro) + L-proline + ATP = L-prolyl-tRNA(Pro) + AMP + diphosphate. Functionally, catalyzes the attachment of proline to tRNA(Pro) in a two-step reaction: proline is first activated by ATP to form Pro-AMP and then transferred to the acceptor end of tRNA(Pro). As ProRS can inadvertently accommodate and process non-cognate amino acids such as alanine and cysteine, to avoid such errors it has two additional distinct editing activities against alanine. One activity is designated as 'pretransfer' editing and involves the tRNA(Pro)-independent hydrolysis of activated Ala-AMP. The other activity is designated 'posttransfer' editing and involves deacylation of mischarged Ala-tRNA(Pro). The misacylated Cys-tRNA(Pro) is not edited by ProRS. This Polynucleobacter necessarius subsp. necessarius (strain STIR1) protein is Proline--tRNA ligase.